Reading from the N-terminus, the 732-residue chain is Non-structural protein 4 (732 aa).

2 stretches are compositionally biased toward polar residues: residues 13–23 (KNKGIQQNQWH) and 31–56 (LSGQ…NSKS). Disordered stretches follow at residues 13–74 (KNKG…NSAA) and 706–732 (LGRN…KQKE). Positions 719–732 (QVEEAENEEEKQKE) are enriched in acidic residues.

The sequence is that of Non-structural protein 4 from Catharanthus roseus (Madagascar periwinkle).